A 255-amino-acid polypeptide reads, in one-letter code: 4-diphosphocytidyl-2-C-methyl-D-erythritol kinase (255 aa).

The active site involves Lys6. Pro95 to Ser105 is a binding site for ATP. Residue Asp137 is part of the active site.

This sequence belongs to the GHMP kinase family. IspE subfamily.

The catalysed reaction is 4-CDP-2-C-methyl-D-erythritol + ATP = 4-CDP-2-C-methyl-D-erythritol 2-phosphate + ADP + H(+). It participates in isoprenoid biosynthesis; isopentenyl diphosphate biosynthesis via DXP pathway; isopentenyl diphosphate from 1-deoxy-D-xylulose 5-phosphate: step 3/6. In terms of biological role, catalyzes the phosphorylation of the position 2 hydroxy group of 4-diphosphocytidyl-2C-methyl-D-erythritol. This chain is 4-diphosphocytidyl-2-C-methyl-D-erythritol kinase, found in Campylobacter jejuni subsp. jejuni serotype O:6 (strain 81116 / NCTC 11828).